A 490-amino-acid polypeptide reads, in one-letter code: tRNA-guanine(15) transglycosylase (490 aa).

The Nucleophile role is filled by Asp90. Substrate-binding residues include Asp125 and Ala193. Zn(2+) is bound by residues Cys276, Cys278, and Cys281.

This sequence belongs to the archaeosine tRNA-ribosyltransferase family. Zn(2+) is required as a cofactor.

The catalysed reaction is guanosine(15) in tRNA + 7-cyano-7-deazaguanine = 7-cyano-7-carbaguanosine(15) in tRNA + guanine. It functions in the pathway tRNA modification; archaeosine-tRNA biosynthesis. Its function is as follows. Exchanges the guanine residue with 7-cyano-7-deazaguanine (preQ0) at position 15 in the dihydrouridine loop (D-loop) of archaeal tRNAs. This chain is tRNA-guanine(15) transglycosylase, found in Methanosarcina mazei (strain ATCC BAA-159 / DSM 3647 / Goe1 / Go1 / JCM 11833 / OCM 88) (Methanosarcina frisia).